Reading from the N-terminus, the 374-residue chain is Dispase autolysis-inducing protein (374 aa).

Positions 1–26 (MKRMGWAVTAAVTTIVLAQSSLAAQA) are cleaved as a signal peptide.

It is found in the secreted. Its function is as follows. Induces autolysis of dispase and thermolysin. The sequence is that of Dispase autolysis-inducing protein (daip) from Streptomyces mobaraensis (Streptoverticillium mobaraense).